The chain runs to 231 residues: MQKFDSLFRSQNIFFIAIVIFILSSVILYHNRSDILKLFTTEYKGLNQITNQEKENKENAILDEKEYETLLSTKSLLNYVNSLKSSKTSIPDSEAIIHESVEVTDNIVEVPIRYTHYLLNVNLLVYNFIQDKDYSKELRILKSYPLPQNIRNILNNLEKYNNNYLVSKSNSTVVIFPIHHKWLEQLIKIEKKSPVMIVKEQDKTLILEKLNYLIYFLYSEKFMQEFVNKDV.

A helical membrane pass occupies residues 10–30 (SQNIFFIAIVIFILSSVILYH).

The protein resides in the membrane. This is an uncharacterized protein from Rickettsia prowazekii (strain Madrid E).